A 368-amino-acid polypeptide reads, in one-letter code: Tubby-like F-box protein 2 (368 aa).

Positions 1 to 17 are enriched in low complexity; that stretch reads MVPWRRSSSSSSAPSSR. Residues 1–44 form a disordered region; the sequence is MVPWRRSSSSSSAPSSRPARRPARTNARVSPDVSSELSPLAGEE. One can recognise an F-box domain in the interval 49 to 104; the sequence is ERWSALVPDLLADILRCVEAGSERWPPRRDVVACASVCRRWRDVAVAVVQPPLESG.

This sequence belongs to the TUB family. In terms of tissue distribution, expressed in stems, leaves, flowers and seeds.

This chain is Tubby-like F-box protein 2 (TULP2), found in Oryza sativa subsp. japonica (Rice).